We begin with the raw amino-acid sequence, 137 residues long: uncharacterized protein (137 aa).

5 helical membrane-spanning segments follow: residues 4 to 26 (AIIL…KIVC), 35 to 57 (IVVN…NIII), 62 to 84 (ILTY…YYAL), 89 to 111 (ASIV…ILFL), and 116 to 135 (TLPQ…LLSI). An EamA domain is found at 13 to 135 (VFYGVGTFFA…IIIGIILLSI (123 aa)).

The protein resides in the cell membrane. This is an uncharacterized protein from Methanocaldococcus jannaschii (strain ATCC 43067 / DSM 2661 / JAL-1 / JCM 10045 / NBRC 100440) (Methanococcus jannaschii).